A 173-amino-acid chain; its full sequence is NADH-quinone oxidoreductase subunit B (173 aa).

The [4Fe-4S] cluster site is built by C52, C53, C117, and C147.

The protein belongs to the complex I 20 kDa subunit family. As to quaternary structure, NDH-1 is composed of 14 different subunits. Subunits NuoB, C, D, E, F, and G constitute the peripheral sector of the complex. Requires [4Fe-4S] cluster as cofactor.

The protein localises to the cell inner membrane. It carries out the reaction a quinone + NADH + 5 H(+)(in) = a quinol + NAD(+) + 4 H(+)(out). NDH-1 shuttles electrons from NADH, via FMN and iron-sulfur (Fe-S) centers, to quinones in the respiratory chain. Couples the redox reaction to proton translocation (for every two electrons transferred, four hydrogen ions are translocated across the cytoplasmic membrane), and thus conserves the redox energy in a proton gradient. This is NADH-quinone oxidoreductase subunit B from Pelagibacter ubique (strain HTCC1062).